Consider the following 118-residue polypeptide: Large ribosomal subunit protein bL20 (118 aa).

Belongs to the bacterial ribosomal protein bL20 family.

Functionally, binds directly to 23S ribosomal RNA and is necessary for the in vitro assembly process of the 50S ribosomal subunit. It is not involved in the protein synthesizing functions of that subunit. This chain is Large ribosomal subunit protein bL20, found in Yersinia enterocolitica serotype O:8 / biotype 1B (strain NCTC 13174 / 8081).